The primary structure comprises 197 residues: Putative early 21.8 kDa protein (197 aa).

This protein is required for viral late gene expression. The sequence is that of Putative early 21.8 kDa protein (DA26) from Orgyia pseudotsugata (Douglas-fir tussock moth).